Here is a 159-residue protein sequence, read N- to C-terminus: UPF0262 protein PHZ_c2197 (159 aa).

Belongs to the UPF0262 family.

The polypeptide is UPF0262 protein PHZ_c2197 (Phenylobacterium zucineum (strain HLK1)).